Consider the following 105-residue polypeptide: uncharacterized protein (105 aa).

The chain crosses the membrane as a helical span at residues 41–62 (GIITKIAASPFVIVLYFNTAFF).

The protein localises to the membrane. This is an uncharacterized protein from Saccharomyces cerevisiae (strain ATCC 204508 / S288c) (Baker's yeast).